Reading from the N-terminus, the 735-residue chain is Phosphoribosylformylglycinamidine synthase subunit PurL (735 aa).

His49 is an active-site residue. ATP contacts are provided by Tyr52 and Lys91. A Mg(2+)-binding site is contributed by Glu93. Substrate contacts are provided by residues 94–97 (SHNH) and Arg116. Catalysis depends on His95, which acts as the Proton acceptor. Asp117 serves as a coordination point for Mg(2+). Gln240 contributes to the substrate binding site. Asp268 contacts Mg(2+). 312 to 314 (ESQ) lines the substrate pocket. 2 residues coordinate ATP: Asp493 and Gly530. Asn531 is a Mg(2+) binding site. Position 533 (Ser533) interacts with substrate.

Belongs to the FGAMS family. As to quaternary structure, monomer. Part of the FGAM synthase complex composed of 1 PurL, 1 PurQ and 2 PurS subunits.

Its subcellular location is the cytoplasm. The enzyme catalyses N(2)-formyl-N(1)-(5-phospho-beta-D-ribosyl)glycinamide + L-glutamine + ATP + H2O = 2-formamido-N(1)-(5-O-phospho-beta-D-ribosyl)acetamidine + L-glutamate + ADP + phosphate + H(+). It participates in purine metabolism; IMP biosynthesis via de novo pathway; 5-amino-1-(5-phospho-D-ribosyl)imidazole from N(2)-formyl-N(1)-(5-phospho-D-ribosyl)glycinamide: step 1/2. In terms of biological role, part of the phosphoribosylformylglycinamidine synthase complex involved in the purines biosynthetic pathway. Catalyzes the ATP-dependent conversion of formylglycinamide ribonucleotide (FGAR) and glutamine to yield formylglycinamidine ribonucleotide (FGAM) and glutamate. The FGAM synthase complex is composed of three subunits. PurQ produces an ammonia molecule by converting glutamine to glutamate. PurL transfers the ammonia molecule to FGAR to form FGAM in an ATP-dependent manner. PurS interacts with PurQ and PurL and is thought to assist in the transfer of the ammonia molecule from PurQ to PurL. The chain is Phosphoribosylformylglycinamidine synthase subunit PurL from Azorhizobium caulinodans (strain ATCC 43989 / DSM 5975 / JCM 20966 / LMG 6465 / NBRC 14845 / NCIMB 13405 / ORS 571).